The chain runs to 215 residues: Nascent polypeptide-associated complex subunit alpha (215 aa).

A disordered region spans residues 1–81; the sequence is MPGEATETVP…SEKKARKAMS (81 aa). Residues 9–28 are compositionally biased toward polar residues; it reads VPATEQELPQPQAETGSGTE. Residues 29-40 are compositionally biased toward acidic residues; sequence SDSDESVPELEG. Phosphoserine; by ILK1 is present on Ser43. The segment covering 44-57 has biased composition (low complexity); that stretch reads TQATTQQAQLAAAA. The interval 69–80 is required for DNA-binding; it reads QSRSEKKARKAM. The NAC-A/B domain occupies 70 to 135; it reads SRSEKKARKA…AKIEDLSQQA (66 aa). The segment at 93–108 is RNA/DNA-binding; that stretch reads RVTIRKSKNILFVITK. At Ser132 the chain carries Phosphoserine. Lys142 is modified (N6-acetyllysine; alternate). Lys142 is covalently cross-linked (Glycyl lysine isopeptide (Lys-Gly) (interchain with G-Cter in SUMO2); alternate). Thr159 carries the phosphothreonine; by GSK3-beta modification. Thr161 carries the phosphothreonine modification. A phosphoserine mark is found at Ser166, Ser186, Ser191, and Ser203. In terms of domain architecture, UBA spans 176–213; sequence VEVKDIEWVMSQANVSRAKAVRALKNNSNNIVNAIMEL.

Belongs to the NAC-alpha family. Part of the nascent polypeptide-associated complex (NAC), which is a heterodimer of NACA and BTF3 (via NAC-A/B domains). NAC associates with ribosomes through the BTF3/NACB subunit and contacts the ribosomal protein L23, which is positioned near the exiting site. Both subunits can contact nascent polypeptide chains. NACA may also form homodimers, and only this form binds DNA. Interacts with TBP and JUN. In terms of processing, phosphorylation of Ser-43 by ILK during cell adhesion may promote nuclear localization. Phosphorylation of Thr-159 by GSK3B may promote proteasome mediated degradation.

It is found in the cytoplasm. It localises to the nucleus. In terms of biological role, prevents inappropriate targeting of non-secretory polypeptides to the endoplasmic reticulum (ER). Binds to nascent polypeptide chains as they emerge from the ribosome and blocks their interaction with the signal recognition particle (SRP), which normally targets nascent secretory peptides to the ER. Also reduces the inherent affinity of ribosomes for protein translocation sites in the ER membrane (M sites). May act as a specific coactivator for JUN, binding to DNA and stabilizing the interaction of JUN homodimers with target gene promoters. This Chinchilla lanigera (Long-tailed chinchilla) protein is Nascent polypeptide-associated complex subunit alpha.